The chain runs to 177 residues: uncharacterized protein (177 aa).

The protein resides in the plastid. It localises to the chloroplast. This is an uncharacterized protein from Chlorella vulgaris (Green alga).